The chain runs to 315 residues: 4-diphosphocytidyl-2-C-methyl-D-erythritol kinase (315 aa).

The active site involves lysine 26. 111-121 (PLAGGLAGGSA) provides a ligand contact to ATP. Aspartate 153 is a catalytic residue.

This sequence belongs to the GHMP kinase family. IspE subfamily.

The enzyme catalyses 4-CDP-2-C-methyl-D-erythritol + ATP = 4-CDP-2-C-methyl-D-erythritol 2-phosphate + ADP + H(+). Its pathway is isoprenoid biosynthesis; isopentenyl diphosphate biosynthesis via DXP pathway; isopentenyl diphosphate from 1-deoxy-D-xylulose 5-phosphate: step 3/6. In terms of biological role, catalyzes the phosphorylation of the position 2 hydroxy group of 4-diphosphocytidyl-2C-methyl-D-erythritol. This is 4-diphosphocytidyl-2-C-methyl-D-erythritol kinase from Salinispora arenicola (strain CNS-205).